A 352-amino-acid polypeptide reads, in one-letter code: Uroporphyrinogen decarboxylase (352 aa).

Residues 26–30 (RQAGR), aspartate 76, tyrosine 153, serine 208, and histidine 323 each bind substrate.

It belongs to the uroporphyrinogen decarboxylase family. In terms of assembly, homodimer.

It localises to the cytoplasm. It carries out the reaction uroporphyrinogen III + 4 H(+) = coproporphyrinogen III + 4 CO2. It participates in porphyrin-containing compound metabolism; protoporphyrin-IX biosynthesis; coproporphyrinogen-III from 5-aminolevulinate: step 4/4. Functionally, catalyzes the decarboxylation of four acetate groups of uroporphyrinogen-III to yield coproporphyrinogen-III. This Prochlorococcus marinus (strain NATL1A) protein is Uroporphyrinogen decarboxylase.